The sequence spans 154 residues: Putative hydrogenase maturation protease MJ0253 (154 aa).

It belongs to the peptidase A31 family.

The chain is Putative hydrogenase maturation protease MJ0253 from Methanocaldococcus jannaschii (strain ATCC 43067 / DSM 2661 / JAL-1 / JCM 10045 / NBRC 100440) (Methanococcus jannaschii).